The sequence spans 92 residues: Endoribonuclease HigB (92 aa).

His92 is a catalytic residue.

As to quaternary structure, forms a complex with the antitoxin HigA which inhibits the mRNA interferase activity. The heterodimer dimerizes to form a HigB-(HigA)2-HigB tetramer that is able to bind to the DNA.

Toxic component of a type II toxin-antitoxin (TA) system. A ribosome-associated translation-dependent mRNA interferase. Inhibits translation by sequence-specific cleavage of mRNA. Prefers either in-frame or out-of-frame 5'-AAA-3' codons (lysine). Also cleaves the first three AAAs of stretches of four or more A sequences. 20% of codons containing AA are cleaved and occassionally cuts even at a single A. This chain is Endoribonuclease HigB, found in Proteus vulgaris.